The sequence spans 845 residues: Beta-mannosidase B (845 aa).

An N-linked (GlcNAc...) asparagine glycan is attached at Asn-252. Glu-432 acts as the Proton donor in catalysis. N-linked (GlcNAc...) asparagine glycosylation is found at Asn-717 and Asn-723.

This sequence belongs to the glycosyl hydrolase 2 family. Beta-mannosidase B subfamily.

The enzyme catalyses Hydrolysis of terminal, non-reducing beta-D-mannose residues in beta-D-mannosides.. It participates in glycan metabolism; N-glycan degradation. Its function is as follows. Exoglycosidase that cleaves the single beta-linked mannose residue from the non-reducing end of beta-mannosidic oligosaccharides of various complexity and length. Prefers mannobiose over mannotriose and has no activity against polymeric mannan. Is also severely restricted by galactosyl substitutions at the +1 subsite. The chain is Beta-mannosidase B (mndB) from Aspergillus fumigatus (strain ATCC MYA-4609 / CBS 101355 / FGSC A1100 / Af293) (Neosartorya fumigata).